A 103-amino-acid chain; its full sequence is Large ribosomal subunit protein uL23 (103 aa).

It belongs to the universal ribosomal protein uL23 family. As to quaternary structure, part of the 50S ribosomal subunit. Contacts protein L29, and trigger factor when it is bound to the ribosome.

Its function is as follows. One of the early assembly proteins it binds 23S rRNA. One of the proteins that surrounds the polypeptide exit tunnel on the outside of the ribosome. Forms the main docking site for trigger factor binding to the ribosome. The polypeptide is Large ribosomal subunit protein uL23 (Chlorobium chlorochromatii (strain CaD3)).